We begin with the raw amino-acid sequence, 421 residues long: Enolase (421 aa).

The active-site Proton donor is the E207. Mg(2+) is bound by residues D244, E285, and D312. Catalysis depends on K337, which acts as the Proton acceptor. The (2R)-2-phosphoglycerate site is built by K337, R366, S367, and K388.

The protein belongs to the enolase family. Mg(2+) serves as cofactor.

It localises to the cytoplasm. Its subcellular location is the secreted. The protein resides in the cell surface. The enzyme catalyses (2R)-2-phosphoglycerate = phosphoenolpyruvate + H2O. It participates in carbohydrate degradation; glycolysis; pyruvate from D-glyceraldehyde 3-phosphate: step 4/5. In terms of biological role, catalyzes the reversible conversion of 2-phosphoglycerate (2-PG) into phosphoenolpyruvate (PEP). It is essential for the degradation of carbohydrates via glycolysis. The sequence is that of Enolase from Ehrlichia ruminantium (strain Gardel).